We begin with the raw amino-acid sequence, 360 residues long: Fructose-bisphosphate aldolase 1 (360 aa).

Ser-63 contributes to the D-glyceraldehyde 3-phosphate binding site. Asp-110 (proton donor) is an active-site residue. Residues His-111, Asp-145, Glu-175, and His-227 each contribute to the Zn(2+) site. Position 228 (Gly-228) interacts with dihydroxyacetone phosphate. His-266 contacts Zn(2+). A dihydroxyacetone phosphate-binding site is contributed by Gly-267 to Ser-269.

Belongs to the class II fructose-bisphosphate aldolase family. As to quaternary structure, homodimer. Zn(2+) serves as cofactor.

It catalyses the reaction beta-D-fructose 1,6-bisphosphate = D-glyceraldehyde 3-phosphate + dihydroxyacetone phosphate. Its pathway is carbohydrate degradation; glycolysis; D-glyceraldehyde 3-phosphate and glycerone phosphate from D-glucose: step 4/4. Catalyzes the aldol condensation of dihydroxyacetone phosphate (DHAP or glycerone-phosphate) with glyceraldehyde 3-phosphate (G3P) to form fructose 1,6-bisphosphate (FBP) in gluconeogenesis and the reverse reaction in glycolysis. This is Fructose-bisphosphate aldolase 1 (FBA1) from Paracoccidioides lutzii (strain ATCC MYA-826 / Pb01) (Paracoccidioides brasiliensis).